The primary structure comprises 195 residues: 3-isopropylmalate dehydratase small subunit (195 aa).

It belongs to the LeuD family. LeuD type 1 subfamily. As to quaternary structure, heterodimer of LeuC and LeuD.

The catalysed reaction is (2R,3S)-3-isopropylmalate = (2S)-2-isopropylmalate. It participates in amino-acid biosynthesis; L-leucine biosynthesis; L-leucine from 3-methyl-2-oxobutanoate: step 2/4. Its function is as follows. Catalyzes the isomerization between 2-isopropylmalate and 3-isopropylmalate, via the formation of 2-isopropylmaleate. The sequence is that of 3-isopropylmalate dehydratase small subunit from Karelsulcia muelleri (strain GWSS) (Sulcia muelleri).